The primary structure comprises 204 residues: CASP-like protein 4B4 (204 aa).

The Cytoplasmic portion of the chain corresponds to 1–60 (MSAAVAASSGAPAADVEKGAAAADANVDGGGAPAAAAASGEGVVSAVVRRWRRQDLLEKS). A helical membrane pass occupies residues 61 to 81 (GSALRVAAWAFSLLAFVVMGA). Topologically, residues 82–98 (NDHGDWRQFEHYEEYRY) are extracellular. A helical transmembrane segment spans residues 99-119 (VVAIGVLAFIYTTLQLVRHGV). Residues 120-130 (RLTGGQDLQGK) are Cytoplasmic-facing. Residues 131–151 (VAVLVDFAGDQVTAYLLMSAV) traverse the membrane as a helical segment. Topologically, residues 152–175 (SAAIPITNRMREGADNVFTDSSAA) are extracellular. Residues 176–196 (SISMAFFAFLCLALSALVSGF) traverse the membrane as a helical segment. Over 197-204 (KLAKQTYI) the chain is Cytoplasmic.

This sequence belongs to the Casparian strip membrane proteins (CASP) family. In terms of assembly, homodimer and heterodimers.

The protein resides in the cell membrane. This Oryza sativa subsp. japonica (Rice) protein is CASP-like protein 4B4.